Here is a 301-residue protein sequence, read N- to C-terminus: uncharacterized protein (301 aa).

The region spanning 27 to 85 is the FHA domain; the sequence is YKIGRHTNKSTSPSPSNLFFNSKVLSRQHAELWLDKDTLSVYIRDVKSSNGTFVNETRL. The segment at 187 to 236 is disordered; it reads TGKTRDNRNNHHYSRKSSPHISSLAVPSTKHLDGERDRNLKRSTSPLSSS. Ser204 is subject to Phosphoserine. Basic and acidic residues predominate over residues 216-226; it reads KHLDGERDRNL. Ser231 is subject to Phosphoserine.

As to quaternary structure, interacts with sad1.

The protein localises to the nucleus. This is an uncharacterized protein from Schizosaccharomyces pombe (strain 972 / ATCC 24843) (Fission yeast).